A 600-amino-acid polypeptide reads, in one-letter code: Arginine--tRNA ligase (600 aa).

L-arginine is bound by residues 151–153 (SPN), histidine 162, tyrosine 332, aspartate 336, and glutamine 360. Positions 152-162 (PNIAKEMHIGH) match the 'HIGH' region motif.

It belongs to the class-I aminoacyl-tRNA synthetase family.

The enzyme catalyses tRNA(Arg) + L-arginine + ATP = L-arginyl-tRNA(Arg) + AMP + diphosphate. The chain is Arginine--tRNA ligase (RARS) from Acanthamoeba polyphaga mimivirus (APMV).